A 640-amino-acid polypeptide reads, in one-letter code: Telomere repeat-binding protein 4 (640 aa).

The region spanning 343–422 is the Ubiquitin-like domain; the sequence is VKFSIKSLRI…LGNLGFTLEP (80 aa). Positions 442–464 are disordered; the sequence is TDSTKLSERSAASPALETGIPLP. One can recognise an HTH myb-type domain in the interval 530 to 589; that stretch reads SQRRTRRPFSVTEVEALVSAVEEVGTGRWRDVKLRSFENASHRTYVDLKDKWKTLVHTAS. A DNA-binding region (H-T-H motif) is located at residues 558 to 585; the sequence is WRDVKLRSFENASHRTYVDLKDKWKTLV.

In terms of assembly, homomultimer. Interacts with SNL1 (via PAH2). Interacts with STO. Expressed ubiquitously. Highest expression in flowers and roots.

It is found in the nucleus. Functionally, binds specifically to the plant telomeric double-stranded DNA sequences 5'-TTTAGGG-3'. At least 2 repeats of telomeric sequences are required for binding. Induces DNA bending. The sequence is that of Telomere repeat-binding protein 4 (TRP4) from Arabidopsis thaliana (Mouse-ear cress).